The chain runs to 366 residues: tRNA 2-selenouridine synthase (366 aa).

One can recognise a Rhodanese domain in the interval 14–137; sequence LLENRPLIDV…IRSFLINTIE (124 aa). Residue Cys-97 is the S-selanylcysteine intermediate of the active site.

This sequence belongs to the SelU family. In terms of assembly, monomer.

It catalyses the reaction 5-methylaminomethyl-2-thiouridine(34) in tRNA + selenophosphate + (2E)-geranyl diphosphate + H2O + H(+) = 5-methylaminomethyl-2-selenouridine(34) in tRNA + (2E)-thiogeraniol + phosphate + diphosphate. The catalysed reaction is 5-methylaminomethyl-2-thiouridine(34) in tRNA + (2E)-geranyl diphosphate = 5-methylaminomethyl-S-(2E)-geranyl-thiouridine(34) in tRNA + diphosphate. The enzyme catalyses 5-methylaminomethyl-S-(2E)-geranyl-thiouridine(34) in tRNA + selenophosphate + H(+) = 5-methylaminomethyl-2-(Se-phospho)selenouridine(34) in tRNA + (2E)-thiogeraniol. It carries out the reaction 5-methylaminomethyl-2-(Se-phospho)selenouridine(34) in tRNA + H2O = 5-methylaminomethyl-2-selenouridine(34) in tRNA + phosphate. Its function is as follows. Involved in the post-transcriptional modification of the uridine at the wobble position (U34) of tRNA(Lys), tRNA(Glu) and tRNA(Gln). Catalyzes the conversion of 2-thiouridine (S2U-RNA) to 2-selenouridine (Se2U-RNA). Acts in a two-step process involving geranylation of 2-thiouridine (S2U) to S-geranyl-2-thiouridine (geS2U) and subsequent selenation of the latter derivative to 2-selenouridine (Se2U) in the tRNA chain. The sequence is that of tRNA 2-selenouridine synthase from Shewanella frigidimarina (strain NCIMB 400).